The sequence spans 504 residues: Histidine ammonia-lyase (504 aa).

The segment at residues 142–144 (ASG) is a cross-link (5-imidazolinone (Ala-Gly)). S143 bears the 2,3-didehydroalanine (Ser) mark.

It belongs to the PAL/histidase family. Contains an active site 4-methylidene-imidazol-5-one (MIO), which is formed autocatalytically by cyclization and dehydration of residues Ala-Ser-Gly.

It is found in the cytoplasm. It carries out the reaction L-histidine = trans-urocanate + NH4(+). The protein operates within amino-acid degradation; L-histidine degradation into L-glutamate; N-formimidoyl-L-glutamate from L-histidine: step 1/3. This chain is Histidine ammonia-lyase, found in Staphylococcus aureus (strain JH1).